A 365-amino-acid chain; its full sequence is Chaperone protein DnaJ (365 aa).

The region spanning 5–71 (DFYEILGIAK…QKRQAYDQFG (67 aa)) is the J domain. The CR-type zinc-finger motif lies at 128–206 (GTTVKIRIPK…CHGKGVVHKQ (79 aa)). Zn(2+) is bound by residues C141, C144, C158, C161, C180, C183, C194, and C197. 4 CXXCXGXG motif repeats span residues 141–148 (CDTCSGTG), 158–165 (CLTCGGAG), 180–187 (CNACSGTG), and 194–201 (CNNCHGKG).

This sequence belongs to the DnaJ family. In terms of assembly, homodimer. The cofactor is Zn(2+).

It is found in the cytoplasm. Its function is as follows. Participates actively in the response to hyperosmotic and heat shock by preventing the aggregation of stress-denatured proteins and by disaggregating proteins, also in an autonomous, DnaK-independent fashion. Unfolded proteins bind initially to DnaJ; upon interaction with the DnaJ-bound protein, DnaK hydrolyzes its bound ATP, resulting in the formation of a stable complex. GrpE releases ADP from DnaK; ATP binding to DnaK triggers the release of the substrate protein, thus completing the reaction cycle. Several rounds of ATP-dependent interactions between DnaJ, DnaK and GrpE are required for fully efficient folding. Also involved, together with DnaK and GrpE, in the DNA replication of plasmids through activation of initiation proteins. This Vesicomyosocius okutanii subsp. Calyptogena okutanii (strain HA) protein is Chaperone protein DnaJ.